The following is a 309-amino-acid chain: Aspartate carbamoyltransferase catalytic subunit (309 aa).

Residues Arg55 and Thr56 each contribute to the carbamoyl phosphate site. Lys85 provides a ligand contact to L-aspartate. The carbamoyl phosphate site is built by Arg106, His135, and Gln138. Arg168 and Arg230 together coordinate L-aspartate. Residues Leu268 and Pro269 each contribute to the carbamoyl phosphate site.

The protein belongs to the aspartate/ornithine carbamoyltransferase superfamily. ATCase family. As to quaternary structure, heterododecamer (2C3:3R2) of six catalytic PyrB chains organized as two trimers (C3), and six regulatory PyrI chains organized as three dimers (R2).

It carries out the reaction carbamoyl phosphate + L-aspartate = N-carbamoyl-L-aspartate + phosphate + H(+). The protein operates within pyrimidine metabolism; UMP biosynthesis via de novo pathway; (S)-dihydroorotate from bicarbonate: step 2/3. Its function is as follows. Catalyzes the condensation of carbamoyl phosphate and aspartate to form carbamoyl aspartate and inorganic phosphate, the committed step in the de novo pyrimidine nucleotide biosynthesis pathway. This is Aspartate carbamoyltransferase catalytic subunit from Aliivibrio fischeri (strain MJ11) (Vibrio fischeri).